A 916-amino-acid polypeptide reads, in one-letter code: Extracellular signal-regulated kinase 7 (916 aa).

A Protein kinase domain is found at phenylalanine 25–valine 319. Residues methionine 31 to valine 39 and lysine 54 each bind ATP. Residue aspartate 149 is the Proton acceptor of the active site. 2 stretches are compositionally biased toward polar residues: residues cysteine 364 to serine 376 and glutamine 390 to proline 403. Disordered stretches follow at residues cysteine 364–arginine 419, proline 452–proline 477, proline 588–arginine 608, lysine 711–tyrosine 742, glutamate 792–aspartate 813, and cysteine 883–asparagine 916. Composition is skewed to basic and acidic residues over residues glutamate 590–arginine 608, arginine 715–leucine 730, and glycine 800–glycine 811. The span at cysteine 883 to histidine 892 shows a compositional bias: basic residues. Residues alanine 894–glutamate 903 are compositionally biased toward basic and acidic residues.

The protein belongs to the protein kinase superfamily. Ser/Thr protein kinase family.

It carries out the reaction L-seryl-[protein] + ATP = O-phospho-L-seryl-[protein] + ADP + H(+). It catalyses the reaction L-threonyl-[protein] + ATP = O-phospho-L-threonyl-[protein] + ADP + H(+). Atypical MAPK protein that regulates protein secretion in a kinase activity-dependent manner. In response to starvation regulates protein secretion by mediating transitional endoplasmic reticulum site disassembly. Mediates inhibition of insulin-like peptide secretion upon disturbed ribosome biogenesis and acts as a downstream effector of TP53. The protein is Extracellular signal-regulated kinase 7 of Drosophila melanogaster (Fruit fly).